The sequence spans 439 residues: Xaa-Pro dipeptidase (439 aa).

Aspartate 244, aspartate 255, histidine 335, glutamate 380, and glutamate 419 together coordinate Mn(2+).

The protein belongs to the peptidase M24B family. Bacterial-type prolidase subfamily. The cofactor is Mn(2+).

It carries out the reaction Xaa-L-Pro dipeptide + H2O = an L-alpha-amino acid + L-proline. Functionally, splits dipeptides with a prolyl residue in the C-terminal position. The sequence is that of Xaa-Pro dipeptidase from Shewanella sp. (strain MR-4).